The sequence spans 349 residues: GATA zinc finger domain-containing protein 24 (349 aa).

Low complexity-rich tracts occupy residues N95 to N169 and N177 to S195. Disordered regions lie at residues N95–K227 and D250–Q294. Positions E196–N212 are enriched in basic and acidic residues. Low complexity predominate over residues S257–S272. A compositionally biased stretch (basic residues) spans K278–K289. The segment at C295–C323 adopts a GATA-type zinc-finger fold.

This chain is GATA zinc finger domain-containing protein 24 (gtaX), found in Dictyostelium discoideum (Social amoeba).